Consider the following 85-residue polypeptide: Large ribosomal subunit protein bL27 (85 aa).

The segment at 1–20 (MAHKKAAGSTRNGRDSEAKR) is disordered.

It belongs to the bacterial ribosomal protein bL27 family.

The polypeptide is Large ribosomal subunit protein bL27 (Colwellia psychrerythraea (strain 34H / ATCC BAA-681) (Vibrio psychroerythus)).